A 285-amino-acid polypeptide reads, in one-letter code: MLIIRNKQDLKEAILEQKKANKTIGYVPTMGFLHEGHMTLVSHARKETDFVVMSVFVNPTQFGPNEDFDAYPRDEAHDAKLAEEGGVDILFVPTVEEIYPTELATKLHVIKRVSVLDGADREGHFDGVVTVLTKLFHLVNPDNAYFGQKDAQQVAVVSGLVEDYFFPINLRIIATVREADGLAKSSRNVYLTEKERKEAPVIHEALQLGRELIESGETNEAKIVQVMTDKINEQPSHENIAYLALYSYPEFTPVTDWTKGIIIAAAVKYSKARLIDNELINVKRR.

30 to 37 (MGFLHEGH) contacts ATP. The active-site Proton donor is the H37. (R)-pantoate is bound at residue Q61. Q61 contributes to the beta-alanine binding site. Position 147–150 (147–150 (GQKD)) interacts with ATP. A (R)-pantoate-binding site is contributed by Q153. ATP is bound by residues V176 and 184–187 (KSSR).

The protein belongs to the pantothenate synthetase family. Homodimer.

The protein localises to the cytoplasm. The catalysed reaction is (R)-pantoate + beta-alanine + ATP = (R)-pantothenate + AMP + diphosphate + H(+). It participates in cofactor biosynthesis; (R)-pantothenate biosynthesis; (R)-pantothenate from (R)-pantoate and beta-alanine: step 1/1. Its function is as follows. Catalyzes the condensation of pantoate with beta-alanine in an ATP-dependent reaction via a pantoyl-adenylate intermediate. The chain is Pantothenate synthetase from Listeria monocytogenes serotype 4b (strain F2365).